The sequence spans 478 residues: Protein FAM83E (478 aa).

The segment at 1 to 293 (MAASQLAALE…LYAASCPLPP (293 aa)) is DUF1669. 3 disordered regions span residues 292-334 (PPAP…PLAH), 359-436 (RART…LPPA), and 452-478 (DATFKLQEPRGVRPSDWAPRAGLGGQP). The span at 309–319 (RSPHRVSRRRS) shows a compositional bias: basic residues. The segment covering 379–388 (RLSQLSGSSD) has biased composition (polar residues).

Belongs to the FAM83 family. In terms of assembly, directly interacts (via DUF1669) with CSNK1A1, CSNK1A1L, CSNK1D and CSNK1E. May interact with RAF1.

The protein localises to the cytoplasm. The protein resides in the perinuclear region. May play a role in MAPK signaling. This Homo sapiens (Human) protein is Protein FAM83E.